The chain runs to 858 residues: Bifunctional uridylyltransferase/uridylyl-removing enzyme (858 aa).

The segment at 1-324 is uridylyltransferase; the sequence is MSAHAAPSPE…PATSGITRVL (324 aa). The uridylyl-removing stretch occupies residues 325–681; the sequence is SADRFVEKQG…ARPSPIGDAL (357 aa). The HD domain maps to 443-565; the sequence is VDQHILMVLR…VGNERYLTAL (123 aa). ACT domains lie at 682–763 and 790–858; these read QVLV…PSKG and ILSV…AIAV.

It belongs to the GlnD family. Mg(2+) serves as cofactor.

It carries out the reaction [protein-PII]-L-tyrosine + UTP = [protein-PII]-uridylyl-L-tyrosine + diphosphate. It catalyses the reaction [protein-PII]-uridylyl-L-tyrosine + H2O = [protein-PII]-L-tyrosine + UMP + H(+). Its activity is regulated as follows. Uridylyltransferase (UTase) activity is inhibited by glutamine, while glutamine activates uridylyl-removing (UR) activity. Its function is as follows. Modifies, by uridylylation and deuridylylation, the PII regulatory proteins (GlnB and homologs), in response to the nitrogen status of the cell that GlnD senses through the glutamine level. Under low glutamine levels, catalyzes the conversion of the PII proteins and UTP to PII-UMP and PPi, while under higher glutamine levels, GlnD hydrolyzes PII-UMP to PII and UMP (deuridylylation). Thus, controls uridylylation state and activity of the PII proteins, and plays an important role in the regulation of nitrogen assimilation and metabolism. This is Bifunctional uridylyltransferase/uridylyl-removing enzyme from Burkholderia orbicola (strain MC0-3).